The primary structure comprises 302 residues: Adipolin (302 aa).

The N-terminal stretch at 1–20 is a signal peptide; sequence MRRWAWAAVVVLLGPQLVLL. Disordered regions lie at residues 28-68 and 86-110; these read EAQR…GPEF and ALRKRCGSRDKKPRDLFGPPGPPGA. A glycan (N-linked (GlcNAc...) asparagine) is linked at N43. Residues 86 to 100 show a composition bias toward basic and acidic residues; the sequence is ALRKRCGSRDKKPRD. The C1q domain occupies 147 to 302; it reads LRLVGEAFHC…SSFSGLLLGT (156 aa).

This sequence belongs to the adipolin/erythroferrone family. In terms of assembly, homomultimer; disulfide-linked. May interact with ERFE. In terms of processing, processed into Adipolin fC1QTNF12 and Adipolin gC1QTNF12 by FURIN. Insulin enhances endogenous C1QTNF12 cleavage. In terms of tissue distribution, predominantly expressed by adipose tissues.

The protein resides in the secreted. In terms of biological role, insulin-sensitizing adipocyte-secreted protein (adipokine) that regulates glucose metabolism in liver and adipose tissue. Promotes glucose uptake in adipocytes and suppresses de novo glucose production in hepatocytes via the PI3K-Akt signaling pathway. Administration lead to reduction of blood glucose. Able to attenuate inflammation in fat tissue. The chain is Adipolin from Homo sapiens (Human).